The following is a 379-amino-acid chain: Diaminopimelate decarboxylase (379 aa).

At Lys48 the chain carries N6-(pyridoxal phosphate)lysine. Pyridoxal 5'-phosphate contacts are provided by residues Gly214 and 242 to 245 (EPGR). Substrate contacts are provided by Arg245, Arg280, and Tyr284. Catalysis depends on Cys309, which acts as the Proton donor. 2 residues coordinate substrate: Glu310 and Tyr338. Tyr338 contributes to the pyridoxal 5'-phosphate binding site.

The protein belongs to the Orn/Lys/Arg decarboxylase class-II family. LysA subfamily. As to quaternary structure, homodimer. Requires pyridoxal 5'-phosphate as cofactor.

The catalysed reaction is meso-2,6-diaminopimelate + H(+) = L-lysine + CO2. It functions in the pathway amino-acid biosynthesis; L-lysine biosynthesis via DAP pathway; L-lysine from DL-2,6-diaminopimelate: step 1/1. Its function is as follows. Specifically catalyzes the decarboxylation of meso-diaminopimelate (meso-DAP) to L-lysine. This Deinococcus radiodurans (strain ATCC 13939 / DSM 20539 / JCM 16871 / CCUG 27074 / LMG 4051 / NBRC 15346 / NCIMB 9279 / VKM B-1422 / R1) protein is Diaminopimelate decarboxylase.